A 179-amino-acid polypeptide reads, in one-letter code: MSRIGNKPIPLPAGVKYTHAGGKVVVEGPKGKIEQVIPEGIKLETKDGHIHAIRETEKHAAVHGLTRALVFNAVEGVTKGWSKDLDIVGIGYRAELKGKDMVVFTLGYSHPIEFPLPTGITAVIDPKQTRVTVSGIDRQKVGQVAADMRSLRKPDPYKNKGVRYVGEKLKKKAGKAGSK.

It belongs to the universal ribosomal protein uL6 family. As to quaternary structure, part of the 50S ribosomal subunit.

In terms of biological role, this protein binds to the 23S rRNA, and is important in its secondary structure. It is located near the subunit interface in the base of the L7/L12 stalk, and near the tRNA binding site of the peptidyltransferase center. In Acidobacterium capsulatum (strain ATCC 51196 / DSM 11244 / BCRC 80197 / JCM 7670 / NBRC 15755 / NCIMB 13165 / 161), this protein is Large ribosomal subunit protein uL6.